Here is a 103-residue protein sequence, read N- to C-terminus: Histone H4 (103 aa).

Residues 1 to 14 show a composition bias toward gly residues; that stretch reads MSGRGKGGKGLGKG. A disordered region spans residues 1–20; sequence MSGRGKGGKGLGKGGAKRHR. An N6-acetyl-N6-methyllysine; alternate modification is found at Lys-6. An N6-methyllysine; alternate mark is found at Lys-6, Lys-9, and Lys-13. Lys-13 bears the N6-acetyl-N6-methyllysine; alternate mark. Residues 17-21 mediate DNA binding; sequence KRHRK. Lys-92 bears the N6-glutaryllysine mark.

It belongs to the histone H4 family. As to quaternary structure, the nucleosome is a histone octamer containing two molecules each of H2A, H2B, H3 and H4 assembled in one H3-H4 heterotetramer and two H2A-H2B heterodimers. The octamer wraps approximately 147 bp of DNA. Glutarylation at Lys-92 (H4K91glu) destabilizes nucleosomes by promoting dissociation of the H2A-H2B dimers from nucleosomes.

It is found in the nucleus. Its subcellular location is the chromosome. Functionally, core component of nucleosome. Nucleosomes wrap and compact DNA into chromatin, limiting DNA accessibility to the cellular machineries which require DNA as a template. Histones thereby play a central role in transcription regulation, DNA repair, DNA replication and chromosomal stability. DNA accessibility is regulated via a complex set of post-translational modifications of histones, also called histone code, and nucleosome remodeling. This chain is Histone H4 (HHF1), found in Candida glabrata (strain ATCC 2001 / BCRC 20586 / JCM 3761 / NBRC 0622 / NRRL Y-65 / CBS 138) (Yeast).